Reading from the N-terminus, the 179-residue chain is Large ribosomal subunit protein uL5 (179 aa).

Belongs to the universal ribosomal protein uL5 family. As to quaternary structure, part of the 50S ribosomal subunit; part of the 5S rRNA/L5/L18/L25 subcomplex. Contacts the 5S rRNA and the P site tRNA. Forms a bridge to the 30S subunit in the 70S ribosome.

Functionally, this is one of the proteins that bind and probably mediate the attachment of the 5S RNA into the large ribosomal subunit, where it forms part of the central protuberance. In the 70S ribosome it contacts protein S13 of the 30S subunit (bridge B1b), connecting the 2 subunits; this bridge is implicated in subunit movement. Contacts the P site tRNA; the 5S rRNA and some of its associated proteins might help stabilize positioning of ribosome-bound tRNAs. In Buchnera aphidicola subsp. Acyrthosiphon kondoi (Acyrthosiphon kondoi symbiotic bacterium), this protein is Large ribosomal subunit protein uL5.